The chain runs to 2621 residues: Nonribosomal peptide synthetase dtpA (2621 aa).

Residues 446 to 844 form an adenylation 1 region; that stretch reads CMEQPNAEAI…GRKDQQVKIR (399 aa). Residues 978-1054 enclose the Carrier 1 domain; sequence QPYTQVEETL…EVALYSRALS (77 aa). Ser-1015 is modified (O-(pantetheine 4'-phosphoryl)serine). A condensation 1 region spans residues 1095 to 1506; sequence EDIYPCTALQ…LNQLELAGPQ (412 aa). Positions 1534-1930 are adenylation 2; it reads SRTQPGASAI…GRRDNQVKLR (397 aa). The Carrier 2 domain maps to 2071-2147; that stretch reads QPSTTQEALV…LFCTNASTSI (77 aa). O-(pantetheine 4'-phosphoryl)serine is present on Ser-2108. The segment at 2220 to 2618 is condensation 2; that stretch reads AIFKLHGSKV…HSARPIASID (399 aa).

The protein belongs to the NRP synthetase family.

Its pathway is alkaloid biosynthesis. In terms of biological role, nonribosomal peptide synthetase; part of the gene cluster that mediates the biosynthesis of the dimeric diketopiperazine alkaloid ditryptophenaline. The nonribosomal peptide synthase dtpA accepts L-tryptophan and L-phenylalanine as its substrates and forms the phenylalanyl-tryptophanyl cyclic dipeptide product cyclophenylalanyltryptophenyl. The N-methyltransferase dtpB is responsible for the N-methylation of cyclophenylalanyltryptophenyl to yield cyclo-N-methylphenylalanyltryptophenyl. The cytochrome P450 monooxygenase is responsible not only for pyrroloindole ring formation but also for concurrent dimerization of N-methylphenylalanyltryptophanyl diketopiperazine monomers into a homodimeric product. This is Nonribosomal peptide synthetase dtpA from Aspergillus flavus (strain ATCC 200026 / FGSC A1120 / IAM 13836 / NRRL 3357 / JCM 12722 / SRRC 167).